The following is a 433-amino-acid chain: Phosphomethylpyrimidine synthase (433 aa).

Substrate is bound by residues asparagine 68, methionine 97, tyrosine 126, histidine 162, serine 184–glycine 186, aspartate 225–arginine 228, and glutamate 264. Histidine 268 serves as a coordination point for Zn(2+). Tyrosine 291 is a substrate binding site. Histidine 332 serves as a coordination point for Zn(2+). [4Fe-4S] cluster is bound by residues cysteine 408, cysteine 411, and cysteine 415.

This sequence belongs to the ThiC family. It depends on [4Fe-4S] cluster as a cofactor.

The catalysed reaction is 5-amino-1-(5-phospho-beta-D-ribosyl)imidazole + S-adenosyl-L-methionine = 4-amino-2-methyl-5-(phosphooxymethyl)pyrimidine + CO + 5'-deoxyadenosine + formate + L-methionine + 3 H(+). It functions in the pathway cofactor biosynthesis; thiamine diphosphate biosynthesis. Functionally, catalyzes the synthesis of the hydroxymethylpyrimidine phosphate (HMP-P) moiety of thiamine from aminoimidazole ribotide (AIR) in a radical S-adenosyl-L-methionine (SAM)-dependent reaction. The polypeptide is Phosphomethylpyrimidine synthase (Fusobacterium nucleatum subsp. nucleatum (strain ATCC 25586 / DSM 15643 / BCRC 10681 / CIP 101130 / JCM 8532 / KCTC 2640 / LMG 13131 / VPI 4355)).